The following is a 109-amino-acid chain: Cell division protein ZapA (109 aa).

Positions 21-99 form a coiled coil; it reads PEQLDALNQA…IEQALLEQGR (79 aa).

It belongs to the ZapA family. Type 1 subfamily. As to quaternary structure, homodimer. Interacts with FtsZ.

It localises to the cytoplasm. Its function is as follows. Activator of cell division through the inhibition of FtsZ GTPase activity, therefore promoting FtsZ assembly into bundles of protofilaments necessary for the formation of the division Z ring. It is recruited early at mid-cell but it is not essential for cell division. The sequence is that of Cell division protein ZapA from Edwardsiella ictaluri (strain 93-146).